The primary structure comprises 539 residues: D-mannonate oxidoreductase (539 aa).

NAD(+) is bound at residue 39–50; that stretch reads WVHFGGGNIFRG.

This sequence belongs to the mannitol dehydrogenase family. UxuB subfamily.

The enzyme catalyses D-mannonate + NAD(+) = keto-D-fructuronate + NADH + H(+). Its pathway is carbohydrate metabolism. Its function is as follows. Catalyzes the reduction of D-fructuronate (D-FruA) to D-mannonate (D-ManA). In Thermotoga maritima (strain ATCC 43589 / DSM 3109 / JCM 10099 / NBRC 100826 / MSB8), this protein is D-mannonate oxidoreductase.